The following is a 363-amino-acid chain: MSPSIVFTGGGTAGHVTPNIALIKEFRKEGWNVEYIGSVSGIEKEMIEPMDIPFHGVSSGKLRRYFSLKNLLDPFKIVLGIIQSSLLFYKIKPDVVFSKGGFVAFPVVVGAWLNRIPVVAHESDMSPGLANRLSFPFVNKICLTFDAGKKYFKRQDKIEVTGTQISSQLLTGNPMKGLEVCRFISSKTCLLVMGGSLGAGSINSCIRSALKQLTSEFQVIHLCGKGKLDSSLVGVEGYCQFEYANEELADLFAASSVVISRAGANSLYEILALGKPHILIPISSQVSRGDQIQNARYFQGLGISVVIQDELLKADVLLQAVQDVMRKKDEIDNKIKALKIESATDKIVAIIKEQAHVQTPRIV.

UDP-N-acetyl-alpha-D-glucosamine contacts are provided by residues 12-14 (TAG), Ser-196, and Gln-291.

Belongs to the glycosyltransferase 28 family. MurG subfamily.

It is found in the cell inner membrane. The enzyme catalyses di-trans,octa-cis-undecaprenyl diphospho-N-acetyl-alpha-D-muramoyl-L-alanyl-D-glutamyl-meso-2,6-diaminopimeloyl-D-alanyl-D-alanine + UDP-N-acetyl-alpha-D-glucosamine = di-trans,octa-cis-undecaprenyl diphospho-[N-acetyl-alpha-D-glucosaminyl-(1-&gt;4)]-N-acetyl-alpha-D-muramoyl-L-alanyl-D-glutamyl-meso-2,6-diaminopimeloyl-D-alanyl-D-alanine + UDP + H(+). Its pathway is cell wall biogenesis; peptidoglycan biosynthesis. Its function is as follows. Cell wall formation. Catalyzes the transfer of a GlcNAc subunit on undecaprenyl-pyrophosphoryl-MurNAc-pentapeptide (lipid intermediate I) to form undecaprenyl-pyrophosphoryl-MurNAc-(pentapeptide)GlcNAc (lipid intermediate II). This is UDP-N-acetylglucosamine--N-acetylmuramyl-(pentapeptide) pyrophosphoryl-undecaprenol N-acetylglucosamine transferase from Legionella pneumophila (strain Corby).